The chain runs to 275 residues: NH(3)-dependent NAD(+) synthetase (275 aa).

47–54 (GISGGQDS) is an ATP binding site. Aspartate 53 lines the Mg(2+) pocket. Arginine 141 is a binding site for deamido-NAD(+). Threonine 161 contacts ATP. Glutamate 166 serves as a coordination point for Mg(2+). Deamido-NAD(+)-binding residues include lysine 174 and aspartate 181. 2 residues coordinate ATP: lysine 190 and threonine 212. 261 to 262 (HK) contributes to the deamido-NAD(+) binding site.

It belongs to the NAD synthetase family. Homodimer.

It catalyses the reaction deamido-NAD(+) + NH4(+) + ATP = AMP + diphosphate + NAD(+) + H(+). The protein operates within cofactor biosynthesis; NAD(+) biosynthesis; NAD(+) from deamido-NAD(+) (ammonia route): step 1/1. In terms of biological role, catalyzes the ATP-dependent amidation of deamido-NAD to form NAD. Uses ammonia as a nitrogen source. The chain is NH(3)-dependent NAD(+) synthetase from Lactiplantibacillus plantarum (strain ATCC BAA-793 / NCIMB 8826 / WCFS1) (Lactobacillus plantarum).